The sequence spans 366 residues: UDP-N-acetylglucosamine--N-acetylmuramyl-(pentapeptide) pyrophosphoryl-undecaprenol N-acetylglucosamine transferase (366 aa).

UDP-N-acetyl-alpha-D-glucosamine contacts are provided by residues 14 to 16 (TGG), Asn125, Arg168, Ser196, and Gln297.

The protein belongs to the glycosyltransferase 28 family. MurG subfamily.

Its subcellular location is the cell inner membrane. The enzyme catalyses di-trans,octa-cis-undecaprenyl diphospho-N-acetyl-alpha-D-muramoyl-L-alanyl-D-glutamyl-meso-2,6-diaminopimeloyl-D-alanyl-D-alanine + UDP-N-acetyl-alpha-D-glucosamine = di-trans,octa-cis-undecaprenyl diphospho-[N-acetyl-alpha-D-glucosaminyl-(1-&gt;4)]-N-acetyl-alpha-D-muramoyl-L-alanyl-D-glutamyl-meso-2,6-diaminopimeloyl-D-alanyl-D-alanine + UDP + H(+). It participates in cell wall biogenesis; peptidoglycan biosynthesis. In terms of biological role, cell wall formation. Catalyzes the transfer of a GlcNAc subunit on undecaprenyl-pyrophosphoryl-MurNAc-pentapeptide (lipid intermediate I) to form undecaprenyl-pyrophosphoryl-MurNAc-(pentapeptide)GlcNAc (lipid intermediate II). This Rhodopseudomonas palustris (strain BisB5) protein is UDP-N-acetylglucosamine--N-acetylmuramyl-(pentapeptide) pyrophosphoryl-undecaprenol N-acetylglucosamine transferase.